A 130-amino-acid polypeptide reads, in one-letter code: Bet1-like SNARE 1-2 (130 aa).

Over Met-1–Lys-106 the chain is Cytoplasmic. A t-SNARE coiled-coil homology domain is found at Ala-33–Val-95. Residues Asp-40 to Arg-82 adopt a coiled-coil conformation. The helical; Anchor for type IV membrane protein transmembrane segment at Leu-107–Ile-122 threads the bilayer. Over Arg-123–Gly-130 the chain is Vesicular.

Belongs to the BET1 family.

The protein localises to the golgi apparatus membrane. Its subcellular location is the endoplasmic reticulum membrane. Required for vesicular transport from the ER to the Golgi complex. Functions as a SNARE associated with ER-derived vesicles. This is Bet1-like SNARE 1-2 (BET12) from Arabidopsis thaliana (Mouse-ear cress).